Reading from the N-terminus, the 260-residue chain is Thiazole synthase (260 aa).

The Schiff-base intermediate with DXP role is filled by Lys102. Residues Gly163, Ala189–Gly190, and Asn211–Thr212 contribute to the 1-deoxy-D-xylulose 5-phosphate site.

It belongs to the ThiG family. As to quaternary structure, homotetramer. Forms heterodimers with either ThiH or ThiS.

It localises to the cytoplasm. The catalysed reaction is [ThiS sulfur-carrier protein]-C-terminal-Gly-aminoethanethioate + 2-iminoacetate + 1-deoxy-D-xylulose 5-phosphate = [ThiS sulfur-carrier protein]-C-terminal Gly-Gly + 2-[(2R,5Z)-2-carboxy-4-methylthiazol-5(2H)-ylidene]ethyl phosphate + 2 H2O + H(+). It participates in cofactor biosynthesis; thiamine diphosphate biosynthesis. Its function is as follows. Catalyzes the rearrangement of 1-deoxy-D-xylulose 5-phosphate (DXP) to produce the thiazole phosphate moiety of thiamine. Sulfur is provided by the thiocarboxylate moiety of the carrier protein ThiS. In vitro, sulfur can be provided by H(2)S. The chain is Thiazole synthase from Geobacter sulfurreducens (strain ATCC 51573 / DSM 12127 / PCA).